A 355-amino-acid polypeptide reads, in one-letter code: UDP-N-acetylglucosamine--N-acetylmuramyl-(pentapeptide) pyrophosphoryl-undecaprenol N-acetylglucosamine transferase (355 aa).

UDP-N-acetyl-alpha-D-glucosamine contacts are provided by residues 14–16 (SGG), N126, R162, S190, I243, 262–267 (ALTVSE), and Q288.

This sequence belongs to the glycosyltransferase 28 family. MurG subfamily.

The protein resides in the cell inner membrane. It carries out the reaction di-trans,octa-cis-undecaprenyl diphospho-N-acetyl-alpha-D-muramoyl-L-alanyl-D-glutamyl-meso-2,6-diaminopimeloyl-D-alanyl-D-alanine + UDP-N-acetyl-alpha-D-glucosamine = di-trans,octa-cis-undecaprenyl diphospho-[N-acetyl-alpha-D-glucosaminyl-(1-&gt;4)]-N-acetyl-alpha-D-muramoyl-L-alanyl-D-glutamyl-meso-2,6-diaminopimeloyl-D-alanyl-D-alanine + UDP + H(+). It participates in cell wall biogenesis; peptidoglycan biosynthesis. In terms of biological role, cell wall formation. Catalyzes the transfer of a GlcNAc subunit on undecaprenyl-pyrophosphoryl-MurNAc-pentapeptide (lipid intermediate I) to form undecaprenyl-pyrophosphoryl-MurNAc-(pentapeptide)GlcNAc (lipid intermediate II). This chain is UDP-N-acetylglucosamine--N-acetylmuramyl-(pentapeptide) pyrophosphoryl-undecaprenol N-acetylglucosamine transferase, found in Blochmanniella pennsylvanica (strain BPEN).